The sequence spans 423 residues: Testin (423 aa).

Disordered stretches follow at residues 1–21 (MSAT…ACAS) and 138–169 (EKQP…PSKC). The PET domain occupies 97–204 (MILTNPVAAK…GDVKFPSEMN (108 aa)). Positions 160–169 (PAHDQDPSKC) are enriched in basic and acidic residues. 3 LIM zinc-binding domains span residues 236–299 (YSCY…CDSE), 301–361 (PRCA…NHAV), and 364–423 (QGCH…RMMS).

It belongs to the prickle / espinas / testin family. As to quaternary structure, interacts via LIM domain 1 with ZYX. Interacts (via LIM domain 3) with ENAH and VASP. Interacts with ALKBH4, talin, actin, alpha-actinin, GRIP1 and PXN. Interacts (via LIM domain 2) with ACTL7A (via N-terminus). Heterodimer with ACTL7A; the heterodimer interacts with ENAH to form a heterotrimer. Detected at the acrosome of round spermatids (at protein level). Isoform TES1 transcript is highly expressed in adult testis and detected at low levels in other tissues. Isoform TES2 transcript is highly expressed in testis, kidney and spleen; intermediate in thymus, submaxillary gland and lung; detected at low levels in other tissues.

It localises to the cytoplasm. It is found in the cell junction. The protein localises to the focal adhesion. Its function is as follows. Scaffold protein that may play a role in cell adhesion, cell spreading and in the reorganization of the actin cytoskeleton. Plays a role in the regulation of cell proliferation. May act as a tumor suppressor. The sequence is that of Testin (Tes) from Mus musculus (Mouse).